The following is a 115-amino-acid chain: NAD(P)H-quinone oxidoreductase subunit M (115 aa).

This sequence belongs to the complex I NdhM subunit family. In terms of assembly, NDH-1 can be composed of about 15 different subunits; different subcomplexes with different compositions have been identified which probably have different functions.

It localises to the cellular thylakoid membrane. The enzyme catalyses a plastoquinone + NADH + (n+1) H(+)(in) = a plastoquinol + NAD(+) + n H(+)(out). The catalysed reaction is a plastoquinone + NADPH + (n+1) H(+)(in) = a plastoquinol + NADP(+) + n H(+)(out). NDH-1 shuttles electrons from an unknown electron donor, via FMN and iron-sulfur (Fe-S) centers, to quinones in the respiratory and/or the photosynthetic chain. The immediate electron acceptor for the enzyme in this species is believed to be plastoquinone. Couples the redox reaction to proton translocation, and thus conserves the redox energy in a proton gradient. Cyanobacterial NDH-1 also plays a role in inorganic carbon-concentration. This Synechococcus sp. (strain CC9902) protein is NAD(P)H-quinone oxidoreductase subunit M.